A 252-amino-acid polypeptide reads, in one-letter code: Pyrroloquinoline-quinone synthase (252 aa).

Belongs to the PqqC family.

The enzyme catalyses 6-(2-amino-2-carboxyethyl)-7,8-dioxo-1,2,3,4,7,8-hexahydroquinoline-2,4-dicarboxylate + 3 O2 = pyrroloquinoline quinone + 2 H2O2 + 2 H2O + H(+). The protein operates within cofactor biosynthesis; pyrroloquinoline quinone biosynthesis. Its function is as follows. Ring cyclization and eight-electron oxidation of 3a-(2-amino-2-carboxyethyl)-4,5-dioxo-4,5,6,7,8,9-hexahydroquinoline-7,9-dicarboxylic-acid to PQQ. In Acinetobacter baumannii (strain ACICU), this protein is Pyrroloquinoline-quinone synthase.